The primary structure comprises 215 residues: Cytidylate kinase (215 aa).

Position 10–18 (10–18 (GPAAAGKST)) interacts with ATP.

It belongs to the cytidylate kinase family. Type 1 subfamily.

It is found in the cytoplasm. It catalyses the reaction CMP + ATP = CDP + ADP. It carries out the reaction dCMP + ATP = dCDP + ADP. The polypeptide is Cytidylate kinase (Staphylococcus epidermidis (strain ATCC 35984 / DSM 28319 / BCRC 17069 / CCUG 31568 / BM 3577 / RP62A)).